A 144-amino-acid chain; its full sequence is MEREGSGGGGGSAGLLQQILSLKLVPRVGNGTLCPNSTSLCSFPEMWYGVFLWALMSSVFFHVPAGLLALFTLRHHKYGRFMSVSILLMGIVGPITAGILTSAAIAGVYRAAGKEMIPFEALTLGTGQTFCVVVVSFLRVLATL.

Residues 1 to 50 (MEREGSGGGGGSAGLLQQILSLKLVPRVGNGTLCPNSTSLCSFPEMWYGV) are Extracellular-facing. N-linked (GlcNAc...) asparagine glycosylation is found at Asn30 and Asn36. Residues 51 to 71 (FLWALMSSVFFHVPAGLLALF) traverse the membrane as a helical segment. At 72-85 (TLRHHKYGRFMSVS) the chain is on the cytoplasmic side. Residues 86 to 106 (ILLMGIVGPITAGILTSAAIA) form a helical membrane-spanning segment. Over 107–116 (GVYRAAGKEM) the chain is Extracellular. A helical transmembrane segment spans residues 117–137 (IPFEALTLGTGQTFCVVVVSF). Residues 138–144 (LRVLATL) are Cytoplasmic-facing.

This sequence belongs to the TMEM170 family. As to quaternary structure, interacts with RTN4.

Its subcellular location is the endoplasmic reticulum membrane. The protein resides in the nucleus envelope. Functionally, acts as a regulator of endoplasmic reticulum (ER) and nuclear envelope (NE) morphogenesis. Affects the ratio between tubular ER and ER sheets by promoting sheet formation at the expense of tubules. Influences NE expansion, nuclear pore complex formation and proper localization of inner nuclear membrane proteins. The polypeptide is Transmembrane protein 170A (Tmem170a) (Mus musculus (Mouse)).